We begin with the raw amino-acid sequence, 860 residues long: DNA mismatch repair protein MutS (860 aa).

607 to 614 serves as a coordination point for ATP; it reads GPNMSGKS.

Belongs to the DNA mismatch repair MutS family.

Functionally, this protein is involved in the repair of mismatches in DNA. It is possible that it carries out the mismatch recognition step. This protein has a weak ATPase activity. The sequence is that of DNA mismatch repair protein MutS from Listeria monocytogenes serovar 1/2a (strain ATCC BAA-679 / EGD-e).